The chain runs to 366 residues: Transcription factor MYB61 (366 aa).

HTH myb-type domains lie at 9–61 (KQKL…INYL) and 62–116 (RPDL…KKKL). DNA-binding regions (H-T-H motif) lie at residues 37–61 (WSSV…INYL) and 89–112 (WSQI…NSSI). The interval 115-164 (KLKQRGIDPNTHKPISEVESFSDKDKPTTSNNKRSGNDHKSPSSSSATNQ) is disordered. Over residues 124–141 (NTHKPISEVESFSDKDKP) the composition is skewed to basic and acidic residues.

Expressed specifically in guard cells. Expressed in sink tissues, such as xylem, roots and developing seeds.

The protein localises to the nucleus. Functionally, transcription factor that coordinates a small network of downstream target genes required for several aspects of plant growth and development, such as xylem formation and xylem cell differentiation, and lateral root formation. Regulates a specific set of target genes by binding DNA to the AC cis-element 5'-ACCTAC-3'. Functions as a transcriptional regulator of stomatal closure. Plays a role the regulation of stomatal pore size independently of abscisic acid (ABA). Required for seed coat mucilage deposition during the development of the seed coat epidermis. Involved in the induction of trichome initiation and branching by positively regulating GL1 and GL2. Required for gibberellin (GA) biosynthesis and degradation by positively affecting the expression of the enzymes that convert GA9 into the bioactive GA4, as well as the enzymes involved in the degradation of GA4. This is Transcription factor MYB61 from Arabidopsis thaliana (Mouse-ear cress).